The sequence spans 80 residues: MIADVYIELKEGVADPEGEATLKALRLLGFKRVKKVSTVKVFRIDIEARSREEAEREIAEMCEKLLANPVIQKYSIVWRE.

This sequence belongs to the PurS family. As to quaternary structure, homodimer. Part of the FGAM synthase complex composed of 1 PurL, 1 PurQ and 2 PurS subunits.

Its subcellular location is the cytoplasm. It carries out the reaction N(2)-formyl-N(1)-(5-phospho-beta-D-ribosyl)glycinamide + L-glutamine + ATP + H2O = 2-formamido-N(1)-(5-O-phospho-beta-D-ribosyl)acetamidine + L-glutamate + ADP + phosphate + H(+). It participates in purine metabolism; IMP biosynthesis via de novo pathway; 5-amino-1-(5-phospho-D-ribosyl)imidazole from N(2)-formyl-N(1)-(5-phospho-D-ribosyl)glycinamide: step 1/2. Functionally, part of the phosphoribosylformylglycinamidine synthase complex involved in the purines biosynthetic pathway. Catalyzes the ATP-dependent conversion of formylglycinamide ribonucleotide (FGAR) and glutamine to yield formylglycinamidine ribonucleotide (FGAM) and glutamate. The FGAM synthase complex is composed of three subunits. PurQ produces an ammonia molecule by converting glutamine to glutamate. PurL transfers the ammonia molecule to FGAR to form FGAM in an ATP-dependent manner. PurS interacts with PurQ and PurL and is thought to assist in the transfer of the ammonia molecule from PurQ to PurL. The polypeptide is Phosphoribosylformylglycinamidine synthase subunit PurS (Archaeoglobus fulgidus (strain ATCC 49558 / DSM 4304 / JCM 9628 / NBRC 100126 / VC-16)).